The sequence spans 369 residues: Isopentenyl-diphosphate delta-isomerase (369 aa).

Residue 9–10 (RK) coordinates substrate. FMN-binding positions include Thr-65, 66-68 (GMT), Ser-96, and Asn-125. 96 to 98 (SQR) provides a ligand contact to substrate. Gln-160 is a substrate binding site. Glu-161 contributes to the Mg(2+) binding site. Residues Lys-193, Ser-218, Thr-223, 275-277 (GVR), and 296-297 (AL) contribute to the FMN site.

This sequence belongs to the IPP isomerase type 2 family. As to quaternary structure, homooctamer. Dimer of tetramers. It depends on FMN as a cofactor. The cofactor is NADPH. Mg(2+) serves as cofactor.

Its subcellular location is the cytoplasm. It carries out the reaction isopentenyl diphosphate = dimethylallyl diphosphate. Its function is as follows. Involved in the biosynthesis of isoprenoids. Catalyzes the 1,3-allylic rearrangement of the homoallylic substrate isopentenyl (IPP) to its allylic isomer, dimethylallyl diphosphate (DMAPP). This Sulfurisphaera tokodaii (strain DSM 16993 / JCM 10545 / NBRC 100140 / 7) (Sulfolobus tokodaii) protein is Isopentenyl-diphosphate delta-isomerase.